Reading from the N-terminus, the 233-residue chain is MKFYALIPAAGSGSRMGGAIEKQYMDVNSVPMIAHAMMVLAREPRIARIFVVLSPTDKRWNNYEWQGWEERIEVLRCGGGTRAETVLNALDAIAEVCDPADWVLVHDAARPCLPDEMLGKLLDEVADDPVGGLLAVPVADTLKRAAGDTSSGTRVEATVPRAGLWQAQTPQMFRHGTLTEALRAAGSDMTDEASAIEKLGLQPQLVESDSRNLKVTYPQDLELASLILGKMNA.

It belongs to the IspD/TarI cytidylyltransferase family. IspD subfamily.

The enzyme catalyses 2-C-methyl-D-erythritol 4-phosphate + CTP + H(+) = 4-CDP-2-C-methyl-D-erythritol + diphosphate. The protein operates within isoprenoid biosynthesis; isopentenyl diphosphate biosynthesis via DXP pathway; isopentenyl diphosphate from 1-deoxy-D-xylulose 5-phosphate: step 2/6. Its function is as follows. Catalyzes the formation of 4-diphosphocytidyl-2-C-methyl-D-erythritol from CTP and 2-C-methyl-D-erythritol 4-phosphate (MEP). The protein is 2-C-methyl-D-erythritol 4-phosphate cytidylyltransferase of Thiobacillus denitrificans (strain ATCC 25259 / T1).